The chain runs to 470 residues: AAA-ATPase At5g17730 (470 aa).

Residues M1 to A18 form the signal peptide. G252–T259 serves as a coordination point for ATP.

Belongs to the AAA ATPase family. BCS1 subfamily. Requires Mg(2+) as cofactor.

The catalysed reaction is ATP + H2O = ADP + phosphate + H(+). The protein is AAA-ATPase At5g17730 of Arabidopsis thaliana (Mouse-ear cress).